A 164-amino-acid polypeptide reads, in one-letter code: MPEQLNTRVEDCFQLAESFFKRPFKRPVVSLKLRGQKAGVAHLHENLLRFNPQLYRENTEHFLKQTVAHEVAHLIAHQLFGDRIQPHGEEWQLIMRGVYELPPDRCHTYEVKRRSVTRYIYKCPCADSDFPFSAQRHSLVRQGRRYLCRRCRNTLVFSGEMRVE.

The region spanning 14 to 156 (QLAESFFKRP…LCRRCRNTLV (143 aa)) is the SprT-like domain. Histidine 69 is a Zn(2+) binding site. The active site involves glutamate 70. Histidine 73 is a Zn(2+) binding site.

It belongs to the SprT family. Zn(2+) serves as cofactor.

The protein localises to the cytoplasm. This is Protein SprT from Pseudomonas fluorescens (strain Pf0-1).